Consider the following 107-residue polypeptide: Translation initiation factor IF-1, chloroplastic (107 aa).

Residues 8-83 form the S1-like domain; it reads REKKNPREAK…SKGRIIYRLP (76 aa). Residues 81 to 107 form a disordered region; sequence RLPHKDSKRTEDSKDTEDLKDTKDSKG. Over residues 83 to 107 the composition is skewed to basic and acidic residues; sequence PHKDSKRTEDSKDTEDLKDTKDSKG.

Belongs to the IF-1 family. As to quaternary structure, component of the 30S ribosomal translation pre-initiation complex which assembles on the 30S ribosome in the order IF-2 and IF-3, IF-1 and N-formylmethionyl-tRNA(fMet); mRNA recruitment can occur at any time during PIC assembly.

The protein localises to the plastid. It is found in the chloroplast. One of the essential components for the initiation of protein synthesis. Stabilizes the binding of IF-2 and IF-3 on the 30S subunit to which N-formylmethionyl-tRNA(fMet) subsequently binds. Helps modulate mRNA selection, yielding the 30S pre-initiation complex (PIC). Upon addition of the 50S ribosomal subunit IF-1, IF-2 and IF-3 are released leaving the mature 70S translation initiation complex. The protein is Translation initiation factor IF-1, chloroplastic of Oryza sativa subsp. indica (Rice).